Consider the following 117-residue polypeptide: MRVKRGFSAHRRHKKYLEMAKGFRGGRSRLYRTAREAVERSLVYAYIGRKQRKREFRKLWILRINAGAREHGLSYSKMMAGLSQAGIMLNRKILAELAVKQKEDFAKLVEIAKNQVH.

This sequence belongs to the bacterial ribosomal protein bL20 family.

In terms of biological role, binds directly to 23S ribosomal RNA and is necessary for the in vitro assembly process of the 50S ribosomal subunit. It is not involved in the protein synthesizing functions of that subunit. This is Large ribosomal subunit protein bL20 from Lawsonia intracellularis (strain PHE/MN1-00).